We begin with the raw amino-acid sequence, 129 residues long: MRHRQSNRKLNRTTSHRLAMFRNMTNSLLKHEVIKTTLPKAKDLRRFVEPLITLGKESTVANQRLAFDRLRDREMVVKLFGELGPRYQARPGGYLRILKYGFRKGDNAPMALVELVDRPESDAAPVDAE.

It belongs to the bacterial ribosomal protein bL17 family. Part of the 50S ribosomal subunit. Contacts protein L32.

This is Large ribosomal subunit protein bL17 from Thiobacillus denitrificans (strain ATCC 25259 / T1).